Reading from the N-terminus, the 436-residue chain is MQVSVETTQGLERRLTITVPAATVDAAVRKELNGLAKTRRIDGFRPGKAPVAIIKKMFGAMAHARVADEMMQSNFIKAIIENKLSPAGAPTMDPKEIQEGQDFEFTATFEVYPEFEVAGLETIKVEKPVATVKDEDLGNMIDTLRKQHATWSEVDAAAADGMRVTMDFVGSIDGEEFDGGKAEGFNLVLGAGRMIPGFEDAIMGKKAGDEFTIDVTFPADYHAENLKGKAAKFASKLNKVEEQILPELTEEFVKRFGIESGNVEELKAEVRKNMERELAQALKNSVKEQVLNGLVEANQIDLPKAAVAQEIDALRQQALQRFGGFQGGNAPELPAELFQGQAERRVRVGLLLGDVIRTNEIKADEARVNSIIESMATAYEDPKEVIEYYQKNEQMLNGVRNLAVEDQAIDLILSKAQVTEKEVAFDEVINKSGAAA.

One can recognise a PPIase FKBP-type domain in the interval 161–246; the sequence is GMRVTMDFVG…LNKVEEQILP (86 aa).

Belongs to the FKBP-type PPIase family. Tig subfamily.

The protein resides in the cytoplasm. It carries out the reaction [protein]-peptidylproline (omega=180) = [protein]-peptidylproline (omega=0). Involved in protein export. Acts as a chaperone by maintaining the newly synthesized protein in an open conformation. Functions as a peptidyl-prolyl cis-trans isomerase. The polypeptide is Trigger factor (Aeromonas hydrophila subsp. hydrophila (strain ATCC 7966 / DSM 30187 / BCRC 13018 / CCUG 14551 / JCM 1027 / KCTC 2358 / NCIMB 9240 / NCTC 8049)).